Consider the following 392-residue polypeptide: Queuine tRNA-ribosyltransferase (392 aa).

Residue Asp-93 is the Proton acceptor of the active site. Residues 93 to 97 (DSGGY), Asp-147, Gln-189, and Gly-216 contribute to the substrate site. The segment at 247–253 (GVGAPED) is RNA binding. Asp-266 serves as the catalytic Nucleophile. The segment at 271–275 (TRVAR) is RNA binding; important for wobble base 34 recognition. The Zn(2+) site is built by Cys-304, Cys-306, Cys-309, and His-335.

This sequence belongs to the queuine tRNA-ribosyltransferase family. Homodimer. Within each dimer, one monomer is responsible for RNA recognition and catalysis, while the other monomer binds to the replacement base PreQ1. The cofactor is Zn(2+).

The catalysed reaction is 7-aminomethyl-7-carbaguanine + guanosine(34) in tRNA = 7-aminomethyl-7-carbaguanosine(34) in tRNA + guanine. It participates in tRNA modification; tRNA-queuosine biosynthesis. Catalyzes the base-exchange of a guanine (G) residue with the queuine precursor 7-aminomethyl-7-deazaguanine (PreQ1) at position 34 (anticodon wobble position) in tRNAs with GU(N) anticodons (tRNA-Asp, -Asn, -His and -Tyr). Catalysis occurs through a double-displacement mechanism. The nucleophile active site attacks the C1' of nucleotide 34 to detach the guanine base from the RNA, forming a covalent enzyme-RNA intermediate. The proton acceptor active site deprotonates the incoming PreQ1, allowing a nucleophilic attack on the C1' of the ribose to form the product. After dissociation, two additional enzymatic reactions on the tRNA convert PreQ1 to queuine (Q), resulting in the hypermodified nucleoside queuosine (7-(((4,5-cis-dihydroxy-2-cyclopenten-1-yl)amino)methyl)-7-deazaguanosine). The sequence is that of Queuine tRNA-ribosyltransferase from Dehalococcoides mccartyi (strain ATCC BAA-2266 / KCTC 15142 / 195) (Dehalococcoides ethenogenes (strain 195)).